The following is a 1640-amino-acid chain: Basal body protein 10 (1640 aa).

Positions 11 to 64 (VLRRKLEALGYSDPLEPASLQLVQKLVEDLVHTTDSYTAVKQQCAKQAQEIAAF) are homodimerization. Positions 93 to 148 (AERHEREAREHYTAVKRLEDTIAELSYWKHAAAEKLASADKENAGLRKRCEELAKL) form a coiled coil. Residues 154 to 185 (SGAATPQSVAPKISSRSPIRVAPPPSPPRPRQ) are disordered. The span at 174–183 (VAPPPSPPRP) shows a compositional bias: pro residues. Coiled-coil stretches lie at residues 191 to 232 (LQAA…RDVE), 260 to 332 (ILQL…LQDT), 370 to 411 (VERL…AQSR), 461 to 722 (FAAL…AEAD), 758 to 960 (ARQM…AQAA), 1010 to 1030 (GEAL…LVRE), 1059 to 1086 (RASA…LAAE), 1129 to 1282 (INQY…LQAS), 1323 to 1494 (AKDQ…AERD), and 1523 to 1557 (AELA…TRAT). Residues 1592-1618 (GQGQVQGPAGTAPAAAAGAPGPQPGQA) are compositionally biased toward low complexity. Residues 1592-1640 (GQGQVQGPAGTAPAAAAGAPGPQPGQAQAGGFGGAHGGGSISLSGGPRR) are disordered. A compositionally biased stretch (gly residues) spans 1619-1631 (QAGGFGGAHGGGS).

The protein belongs to the CEP135/TSGA10 family. In terms of assembly, homodimer.

The protein localises to the cytoplasm. Its subcellular location is the cytoskeleton. It localises to the microtubule organizing center. It is found in the centrosome. The protein resides in the centriole. In terms of biological role, microtubule-binding protein essential for cytoskeletal organization (e.g. rootlet microtubule bundles) and flagellar basal body/centriole assembly. The sequence is that of Basal body protein 10 from Chlamydomonas reinhardtii (Chlamydomonas smithii).